We begin with the raw amino-acid sequence, 318 residues long: Acetyl-coenzyme A carboxylase carboxyl transferase subunit beta (318 aa).

In terms of domain architecture, CoA carboxyltransferase N-terminal spans 25-294; that stretch reads LWSKCSECGT…AVKGELPAPA (270 aa). Positions 29, 32, 48, and 51 each coordinate Zn(2+). Residues 29-51 form a C4-type zinc finger; sequence CSECGTMLFHRELSDNLNVCTNC. The segment at 286-318 is disordered; that stretch reads VKGELPAPAPLESDAETALASDTDPNGAPPSKD.

Belongs to the AccD/PCCB family. Acetyl-CoA carboxylase is a heterohexamer composed of biotin carboxyl carrier protein (AccB), biotin carboxylase (AccC) and two subunits each of ACCase subunit alpha (AccA) and ACCase subunit beta (AccD). Zn(2+) is required as a cofactor.

Its subcellular location is the cytoplasm. The enzyme catalyses N(6)-carboxybiotinyl-L-lysyl-[protein] + acetyl-CoA = N(6)-biotinyl-L-lysyl-[protein] + malonyl-CoA. It functions in the pathway lipid metabolism; malonyl-CoA biosynthesis; malonyl-CoA from acetyl-CoA: step 1/1. Functionally, component of the acetyl coenzyme A carboxylase (ACC) complex. Biotin carboxylase (BC) catalyzes the carboxylation of biotin on its carrier protein (BCCP) and then the CO(2) group is transferred by the transcarboxylase to acetyl-CoA to form malonyl-CoA. This Jannaschia sp. (strain CCS1) protein is Acetyl-coenzyme A carboxylase carboxyl transferase subunit beta.